Here is a 466-residue protein sequence, read N- to C-terminus: Cysteine--tRNA ligase (466 aa).

Cysteine 29 is a binding site for Zn(2+). The short motif at 31–41 (ATVQAPPHIGH) is the 'HIGH' region element. Positions 211, 236, and 240 each coordinate Zn(2+). A 'KMSKS' region motif is present at residues 267 to 271 (KMSKS). Lysine 270 contacts ATP.

This sequence belongs to the class-I aminoacyl-tRNA synthetase family. As to quaternary structure, monomer. Zn(2+) serves as cofactor.

The protein localises to the cytoplasm. The enzyme catalyses tRNA(Cys) + L-cysteine + ATP = L-cysteinyl-tRNA(Cys) + AMP + diphosphate. The sequence is that of Cysteine--tRNA ligase from Thermobifida fusca (strain YX).